The primary structure comprises 347 residues: MNPLALSLILTTLLAGTLITMMSSHWLTAWMGLEMNMLTMIPILMKTTNPRSTEAATKYFMTQAMASMMLMMALTINLMYSGQWSITKMTNPVASNMALMALMTKLGSAPFHFWVPEVTQGVELTPGMILLTWQKLAPLSLLYQMATYTNTNLIYLSGLLSILIGGWGGLNQTQLRKILAYSSISHMGWMLIILPFNPTLTLLNLTIYIMLTLSIFMILTNTFTTSMSSLTLMWNKTPAMTIMLMTTLLSLGGLPPLSGFMPKWLMIHELTKNNSIIMPLTMAIMALLNMYFYMRLIYYSSLTILPSTNNMKMTWRFTNTKHTMTLPTLITLSNMLLPLTPMISMLE.

9 consecutive transmembrane segments (helical) span residues 3-23 (PLALSLILTTLLAGTLITMMS), 59-79 (YFMTQAMASMMLMMALTINLM), 93-115 (VASNMALMALMTKLGSAPFHFWV), 150-170 (NTNLIYLSGLLSILIGGWGGL), 178-198 (ILAYSSISHMGWMLIILPFNP), 199-219 (TLTLLNLTIYIMLTLSIFMIL), 242-262 (IMLMTTLLSLGGLPPLSGFMP), 274-294 (NSIIMPLTMAIMALLNMYFYM), and 326-346 (LPTLITLSNMLLPLTPMISML).

The protein belongs to the complex I subunit 2 family. Core subunit of respiratory chain NADH dehydrogenase (Complex I) which is composed of 45 different subunits. Interacts with TMEM242.

It is found in the mitochondrion inner membrane. It carries out the reaction a ubiquinone + NADH + 5 H(+)(in) = a ubiquinol + NAD(+) + 4 H(+)(out). Functionally, core subunit of the mitochondrial membrane respiratory chain NADH dehydrogenase (Complex I) which catalyzes electron transfer from NADH through the respiratory chain, using ubiquinone as an electron acceptor. Essential for the catalytic activity and assembly of complex I. This chain is NADH-ubiquinone oxidoreductase chain 2, found in Loxodonta africana (African elephant).